Reading from the N-terminus, the 147-residue chain is Large ribosomal subunit protein bL9 (147 aa).

It belongs to the bacterial ribosomal protein bL9 family.

In terms of biological role, binds to the 23S rRNA. This is Large ribosomal subunit protein bL9 from Bacteroides fragilis (strain YCH46).